Here is a 945-residue protein sequence, read N- to C-terminus: Endo-1,4-beta-xylanase 1 (945 aa).

Basic and acidic residues predominate over residues 16–41; the sequence is NGDRNPDKKSRESMEVSRKDNEEPEK. Residues 16–50 are disordered; it reads NGDRNPDKKSRESMEVSRKDNEEPEKQNNNNVASI. CBM-cenC domains are found at residues 57–197, 227–362, and 397–541; these read NVIV…EGPS, IVVN…IEGP, and NILT…GPSS. N-linked (GlcNAc...) asparagine glycans are attached at residues asparagine 86, asparagine 239, asparagine 305, asparagine 349, asparagine 417, asparagine 453, and asparagine 687. One can recognise a GH10 domain in the interval 589–884; that stretch reads SGASVRVRQI…NEAGKRFLAV (296 aa). Residue glutamate 718 is the Proton donor of the active site. The Nucleophile role is filled by glutamate 819.

The protein belongs to the glycosyl hydrolase 10 (cellulase F) family. In terms of tissue distribution, predominantly expressed in vascular bundles, but not in vessel cells. Mostly expressed in stems, at lower levels in roots, and weakly in inflorescences and seedlings.

It is found in the secreted. The protein resides in the cell wall. It carries out the reaction Endohydrolysis of (1-&gt;4)-beta-D-xylosidic linkages in xylans.. It participates in glycan degradation; xylan degradation. Binds to and hydrolyzes insoluble and soluble xylan substrates. Exhibits xylanase activity. This is Endo-1,4-beta-xylanase 1 from Arabidopsis thaliana (Mouse-ear cress).